The chain runs to 561 residues: 3beta-hydroxysteroid-dehydrogenase/decarboxylase isoform 3 (561 aa).

Lys-166 provides a ligand contact to NAD(+). The region spanning 379–561 (VADILLWRNE…SDASSKPMFM (183 aa)) is the Reticulon domain. Transmembrane regions (helical) follow at residues 392–412 (FVSF…GNTF), 420–440 (LFIF…IFGF), and 504–524 (SLAA…FIYE).

This sequence belongs to the 3-beta-HSD family.

The protein resides in the endoplasmic reticulum membrane. The catalysed reaction is a 3beta-hydroxysteroid-4alpha-carboxylate + NADP(+) = a 3-oxosteroid + CO2 + NADPH. The enzyme catalyses a 3beta-hydroxysteroid-4alpha-carboxylate + NAD(+) = a 3-oxosteroid + CO2 + NADH. It functions in the pathway steroid biosynthesis; zymosterol biosynthesis; zymosterol from lanosterol: step 4/6. This chain is 3beta-hydroxysteroid-dehydrogenase/decarboxylase isoform 3 (3BETAHSD/D3), found in Arabidopsis thaliana (Mouse-ear cress).